We begin with the raw amino-acid sequence, 494 residues long: Glycerol kinase (494 aa).

Residue threonine 12 participates in ADP binding. Positions 12, 13, and 14 each coordinate ATP. Sn-glycerol 3-phosphate is bound at residue threonine 12. Arginine 16 is an ADP binding site. Sn-glycerol 3-phosphate is bound by residues arginine 82, glutamate 83, tyrosine 134, and aspartate 244. Positions 82, 83, 134, 244, and 245 each coordinate glycerol. Threonine 266 and glycine 309 together coordinate ADP. Positions 266, 309, 313, and 410 each coordinate ATP. Residues glycine 410 and asparagine 414 each contribute to the ADP site.

This sequence belongs to the FGGY kinase family. As to quaternary structure, homotetramer and homodimer (in equilibrium).

It carries out the reaction glycerol + ATP = sn-glycerol 3-phosphate + ADP + H(+). It functions in the pathway polyol metabolism; glycerol degradation via glycerol kinase pathway; sn-glycerol 3-phosphate from glycerol: step 1/1. Activated by phosphorylation and inhibited by fructose 1,6-bisphosphate (FBP). Key enzyme in the regulation of glycerol uptake and metabolism. Catalyzes the phosphorylation of glycerol to yield sn-glycerol 3-phosphate. The sequence is that of Glycerol kinase from Desulfitobacterium hafniense (strain DSM 10664 / DCB-2).